The chain runs to 151 residues: Large ribosomal subunit protein bL9 (151 aa).

Belongs to the bacterial ribosomal protein bL9 family.

Functionally, binds to the 23S rRNA. The chain is Large ribosomal subunit protein bL9 from Rhodococcus opacus (strain B4).